A 365-amino-acid chain; its full sequence is Putative F-box/kelch-repeat protein At3g16880 (365 aa).

The F-box domain maps to Met1–Gln47. Kelch repeat units lie at residues Arg98–Ser149 and Ile155–Asn205.

The protein is Putative F-box/kelch-repeat protein At3g16880 of Arabidopsis thaliana (Mouse-ear cress).